A 173-amino-acid polypeptide reads, in one-letter code: Bifunctional protein PyrR (173 aa).

A PRPP-binding motif is present at residues 93-105 (IILVDDVLYTGRT).

Belongs to the purine/pyrimidine phosphoribosyltransferase family. PyrR subfamily. In terms of assembly, homodimer and homohexamer; in equilibrium.

It carries out the reaction UMP + diphosphate = 5-phospho-alpha-D-ribose 1-diphosphate + uracil. In terms of biological role, regulates transcriptional attenuation of the pyrimidine nucleotide (pyr) operon by binding in a uridine-dependent manner to specific sites on pyr mRNA. This disrupts an antiterminator hairpin in the RNA and favors formation of a downstream transcription terminator, leading to a reduced expression of downstream genes. Functionally, also displays a weak uracil phosphoribosyltransferase activity which is not physiologically significant. This Streptococcus equi subsp. zooepidemicus (strain MGCS10565) protein is Bifunctional protein PyrR.